The following is a 488-amino-acid chain: 3-octaprenyl-4-hydroxybenzoate carboxy-lyase (488 aa).

Residue asparagine 172 coordinates Mn(2+). Prenylated FMN is bound by residues 175 to 177 (IYR), 189 to 191 (RWL), and 194 to 195 (RG). Residue glutamate 238 participates in Mn(2+) binding. The active-site Proton donor is aspartate 287.

It belongs to the UbiD family. As to quaternary structure, homohexamer. It depends on prenylated FMN as a cofactor. The cofactor is Mn(2+).

It localises to the cell membrane. The enzyme catalyses a 4-hydroxy-3-(all-trans-polyprenyl)benzoate + H(+) = a 2-(all-trans-polyprenyl)phenol + CO2. It participates in cofactor biosynthesis; ubiquinone biosynthesis. Functionally, catalyzes the decarboxylation of 3-octaprenyl-4-hydroxy benzoate to 2-octaprenylphenol, an intermediate step in ubiquinone biosynthesis. The chain is 3-octaprenyl-4-hydroxybenzoate carboxy-lyase from Ectopseudomonas mendocina (strain ymp) (Pseudomonas mendocina).